Consider the following 656-residue polypeptide: Very long-chain specific acyl-CoA dehydrogenase, mitochondrial (656 aa).

The segment at 1–33 (MQSARMTPSVGRQLLRLGARSSRSTTVLQGQPR) is disordered. The N-terminal 41 residues, 1 to 41 (MQSARMTPSVGRQLLRLGARSSRSTTVLQGQPRPISAQRLY), are a transit peptide targeting the mitochondrion. Positions 42–483 (AREATQAVLD…ALQGCMDKGK (442 aa)) are catalytic. Lys-52 carries the post-translational modification N6-acetyllysine. N6-acetyllysine; alternate is present on residues Lys-72 and Lys-128. 2 positions are modified to N6-succinyllysine; alternate: Lys-72 and Lys-128. Lys-196 bears the N6-succinyllysine mark. 215–224 (FCLTEPSSGS) is an FAD binding site. Cys-238 carries the post-translational modification S-nitrosocysteine. Position 240 is an N6-acetyllysine; alternate (Lys-240). Lys-240 is subject to N6-succinyllysine; alternate. Residue 250–252 (WIS) coordinates FAD. Lys-269 carries the N6-succinyllysine modification. N6-acetyllysine; alternate is present on residues Lys-277 and Lys-279. An N6-succinyllysine; alternate mark is found at Lys-277 and Lys-279. An N6-acetyllysine mark is found at Lys-299 and Lys-317. N6-acetyllysine; alternate is present on Lys-332. Lys-332 bears the N6-succinyllysine; alternate mark. Position 373 is an N6-succinyllysine (Lys-373). Substrate is bound at residue 462 to 464 (FEG). The active-site Proton acceptor is Glu-463. 465 to 467 (AND) lines the FAD pocket. Residue Lys-483 is modified to N6-acetyllysine; alternate. Lys-483 is subject to N6-succinyllysine; alternate. The tract at residues 484–517 (ELTGLGNALKNPFGNVGLLMGEAGKQLRRRTGIG) is membrane-anchoring. 2 positions are modified to phosphoserine: Ser-518 and Ser-523. An N6-acetyllysine modification is found at Lys-551. An N6-acetyllysine; alternate modification is found at Lys-557. Lys-557 is modified (N6-succinyllysine; alternate). Gln-563 is an FAD binding site. Residue Lys-640 is modified to N6-succinyllysine.

It belongs to the acyl-CoA dehydrogenase family. In terms of assembly, homodimer. Homodimerizes after import into the mitochondrion. The cofactor is FAD. In terms of processing, S-nitrosylation at Cys-238 in liver improves catalytic efficiency.

The protein resides in the mitochondrion inner membrane. The catalysed reaction is a very-long-chain 2,3-saturated fatty acyl-CoA + oxidized [electron-transfer flavoprotein] + H(+) = a very-long-chain (2E)-enoyl-CoA + reduced [electron-transfer flavoprotein]. It carries out the reaction dodecanoyl-CoA + oxidized [electron-transfer flavoprotein] + H(+) = (2E)-dodecenoyl-CoA + reduced [electron-transfer flavoprotein]. It catalyses the reaction tetradecanoyl-CoA + oxidized [electron-transfer flavoprotein] + H(+) = (2E)-tetradecenoyl-CoA + reduced [electron-transfer flavoprotein]. The enzyme catalyses oxidized [electron-transfer flavoprotein] + hexadecanoyl-CoA + H(+) = (2E)-hexadecenoyl-CoA + reduced [electron-transfer flavoprotein]. The catalysed reaction is octadecanoyl-CoA + oxidized [electron-transfer flavoprotein] + H(+) = (2E)-octadecenoyl-CoA + reduced [electron-transfer flavoprotein]. It carries out the reaction eicosanoyl-CoA + oxidized [electron-transfer flavoprotein] + H(+) = (2E)-eicosenoyl-CoA + reduced [electron-transfer flavoprotein]. It catalyses the reaction docosanoyl-CoA + oxidized [electron-transfer flavoprotein] + H(+) = (2E)-docosenoyl-CoA + reduced [electron-transfer flavoprotein]. The enzyme catalyses tetracosanoyl-CoA + oxidized [electron-transfer flavoprotein] + H(+) = (2E)-tetracosenoyl-CoA + reduced [electron-transfer flavoprotein]. It participates in lipid metabolism; mitochondrial fatty acid beta-oxidation. In terms of biological role, very long-chain specific acyl-CoA dehydrogenase is one of the acyl-CoA dehydrogenases that catalyze the first step of mitochondrial fatty acid beta-oxidation, an aerobic process breaking down fatty acids into acetyl-CoA and allowing the production of energy from fats. The first step of fatty acid beta-oxidation consists in the removal of one hydrogen from C-2 and C-3 of the straight-chain fatty acyl-CoA thioester, resulting in the formation of trans-2-enoyl-CoA. Among the different mitochondrial acyl-CoA dehydrogenases, very long-chain specific acyl-CoA dehydrogenase acts specifically on acyl-CoAs with saturated 12 to 24 carbons long primary chains. The chain is Very long-chain specific acyl-CoA dehydrogenase, mitochondrial from Mus musculus (Mouse).